The following is a 259-amino-acid chain: DNA-directed RNA polymerase 30 kDa polypeptide (259 aa).

A TFIIS-type zinc finger spans residues 155-195 (YNTPCPNCKSRNTTPMMIQTRAADEPPLVRHACRDCKQHFK). Zn(2+)-binding residues include C159, C162, C187, and C190. Residues 220–259 (EILPDNNPSPPESPEPASPIDDGLIRATFDRNDEPPEDDE) are disordered. Residues 226–236 (NPSPPESPEPA) show a composition bias toward pro residues.

The protein belongs to the poxviridae DNA-directed RNA polymerase 30 kDa subunit family. The DNA-dependent RNA polymerase (vRNAP) consists of eight subunits encoded by early viral genes and termed according to their apparent molecular masses Rpo147, Rpo132, Rpo35, Rpo30, Rpo22, Rpo19, Rpo18, and Rpo7. The same holoenzyme, with the addition of the transcription-specificity factor RAP94, is used for early gene expression.

Its subcellular location is the virion. The protein resides in the host cytoplasm. It catalyses the reaction RNA(n) + a ribonucleoside 5'-triphosphate = RNA(n+1) + diphosphate. Functionally, part of the DNA-dependent RNA polymerase which catalyzes the transcription of viral DNA into RNA using the four ribonucleoside triphosphates as substrates. Responsible for the transcription of early, intermediate and late genes. DNA-dependent RNA polymerase associates with the early transcription factor (ETF), itself composed of OPG118 and OPG134, thereby allowing the early genes transcription. Late transcription, and probably also intermediate transcription, require newly synthesized RNA polymerase. The polypeptide is DNA-directed RNA polymerase 30 kDa polypeptide (OPG066) (Bos taurus (Bovine)).